A 169-amino-acid polypeptide reads, in one-letter code: Small ribosomal subunit protein uS5 (169 aa).

The S5 DRBM domain maps to 14–77; it reads LQEKVVEVRR…EDAKKNLIVV (64 aa).

This sequence belongs to the universal ribosomal protein uS5 family. Part of the 30S ribosomal subunit. Contacts proteins S4 and S8.

Functionally, with S4 and S12 plays an important role in translational accuracy. Its function is as follows. Located at the back of the 30S subunit body where it stabilizes the conformation of the head with respect to the body. The protein is Small ribosomal subunit protein uS5 of Clostridioides difficile (strain 630) (Peptoclostridium difficile).